A 153-amino-acid chain; its full sequence is Iron-sulfur cluster assembly scaffold protein IscU 1 (153 aa).

Residues cysteine 33, cysteine 58, histidine 101, and cysteine 102 each coordinate [2Fe-2S] cluster.

Belongs to the NifU family. In terms of assembly, forms a heterotetramer with IscS2.

Its function is as follows. A scaffold on which IscS assembles Fe-S clusters. Subsequently gives the nascent cluster to other proteins. It is likely that Fe-S cluster coordination is flexible as the role of this complex is to build and then hand off Fe-S clusters. This is Iron-sulfur cluster assembly scaffold protein IscU 1 (iscU1) from Archaeoglobus fulgidus (strain ATCC 49558 / DSM 4304 / JCM 9628 / NBRC 100126 / VC-16).